Consider the following 626-residue polypeptide: Chaperone protein HtpG (626 aa).

The segment at 1 to 339 is a; substrate-binding; sequence MSQNQETRGF…SNDLPLNVSR (339 aa). The tract at residues 340-555 is b; the sequence is EILQDNKITA…NDQMTTQMAK (216 aa). Residues 556–626 are c; it reads LFAAAGQPVP…FIKRINKLLG (71 aa).

The protein belongs to the heat shock protein 90 family. In terms of assembly, homodimer.

The protein resides in the cytoplasm. Functionally, molecular chaperone. Has ATPase activity. This chain is Chaperone protein HtpG, found in Haemophilus influenzae (strain ATCC 51907 / DSM 11121 / KW20 / Rd).